The sequence spans 604 residues: Putative O-acetyltransferase SAV0974 (604 aa).

11 consecutive transmembrane segments (helical) span residues 15-35 (YMPG…IYHL), 43-63 (GFLG…SLLL), 85-105 (LLPA…LLKS), 150-170 (AIEE…LLTI), 176-196 (IGFI…FIYS), 212-232 (LQTL…KLKN), 240-260 (YVID…FFII), 267-287 (IYDG…ASVV), 310-330 (YSLY…YVDG), 332-352 (IPVY…ELSY), and 377-397 (FIRM…LVGA). Residues Ser459, Asp581, and His584 contribute to the active site.

The protein belongs to the acyltransferase 3 family.

The protein resides in the cell membrane. This chain is Putative O-acetyltransferase SAV0974, found in Staphylococcus aureus (strain Mu50 / ATCC 700699).